A 364-amino-acid polypeptide reads, in one-letter code: Carbamoyl phosphate synthase small chain (364 aa).

CPSase stretches follow at residues 1-167 and 1-171; these read MKRQ…PSPG and MKRQ…RGER. The L-glutamine site is built by serine 45, glycine 219, and glycine 221. In terms of domain architecture, Glutamine amidotransferase type-1 spans 171 to 358; that stretch reads RIVLIDFGMK…LALIREFNKK (188 aa). Cysteine 246 functions as the Nucleophile in the catalytic mechanism. Leucine 247, glutamine 250, asparagine 288, glycine 290, and tyrosine 291 together coordinate L-glutamine. Residues histidine 331 and glutamate 333 contribute to the active site.

This sequence belongs to the CarA family. In terms of assembly, composed of two chains; the small (or glutamine) chain promotes the hydrolysis of glutamine to ammonia, which is used by the large (or ammonia) chain to synthesize carbamoyl phosphate. Tetramer of heterodimers (alpha,beta)4.

It catalyses the reaction hydrogencarbonate + L-glutamine + 2 ATP + H2O = carbamoyl phosphate + L-glutamate + 2 ADP + phosphate + 2 H(+). The enzyme catalyses L-glutamine + H2O = L-glutamate + NH4(+). It participates in amino-acid biosynthesis; L-arginine biosynthesis; carbamoyl phosphate from bicarbonate: step 1/1. Its pathway is pyrimidine metabolism; UMP biosynthesis via de novo pathway; (S)-dihydroorotate from bicarbonate: step 1/3. Functionally, small subunit of the glutamine-dependent carbamoyl phosphate synthetase (CPSase). CPSase catalyzes the formation of carbamoyl phosphate from the ammonia moiety of glutamine, carbonate, and phosphate donated by ATP, constituting the first step of 2 biosynthetic pathways, one leading to arginine and/or urea and the other to pyrimidine nucleotides. The small subunit (glutamine amidotransferase) binds and cleaves glutamine to supply the large subunit with the substrate ammonia. The sequence is that of Carbamoyl phosphate synthase small chain from Bacillus caldolyticus.